The chain runs to 251 residues: Transmembrane ascorbate-dependent reductase CYB561 (251 aa).

The residue at position 1 (M1) is an N-acetylmethionine. Over 1–16 the chain is Cytoplasmic; that stretch reads MEGGAAAATPTALPYY. The chain crosses the membrane as a helical span at residues 17-37; the sequence is VAFSQLLGLTLVAMTGAWLGL. The region spanning 19–220 is the Cytochrome b561 domain; sequence FSQLLGLTLV…FGGAVLYILT (202 aa). Topologically, residues 38–51 are vesicular; sequence YRGGIAWESDLQFN. Residues 52-72 form a helical membrane-spanning segment; sequence AHPLCMVIGLIFLQGNALLVY. Residues H53, R73, and K80 each contribute to the heme b site. The Cytoplasmic segment spans residues 73-85; that stretch reads RVFRNEAKRTTKV. Residues K80 and K84 each coordinate L-ascorbate. Residues 86 to 106 form a helical membrane-spanning segment; it reads LHGLLHIFALVIALVGLVAVF. Heme b-binding positions include H87, 116–119, and H121; that span reads DLYS. At 107–124 the chain is on the vesicular side; that stretch reads DYHRKKGYADLYSLHSWC. The chain crosses the membrane as a helical span at residues 125–145; the sequence is GILVFVLYFVQWLVGFSFFLF. Residues 146–158 lie on the Cytoplasmic side of the membrane; that stretch reads PGASFSLRSRYRP. R153 contributes to the L-ascorbate binding site. Residues 159–179 form a helical membrane-spanning segment; sequence QHIFFGATIFLLSVGTALLGL. Heme b is bound by residues H160 and E181. The Vesicular segment spans residues 180–198; that stretch reads KEALLFNLGGKYSAFEPEG. Residues 199-219 traverse the membrane as a helical segment; it reads VLANVLGLLLACFGGAVLYIL. Residues 220–251 lie on the Cytoplasmic side of the membrane; the sequence is TRADWKRPSQAEEQALSMDFKTLTEGDSPGSQ. K225 contributes to the heme b binding site. Position 247 is a phosphoserine (S247).

It depends on heme b as a cofactor. As to expression, expressed in many tissues, in particular the brain especially in the cortex and hippocampus.

It is found in the cytoplasmic vesicle. The protein resides in the secretory vesicle. The protein localises to the chromaffin granule membrane. The enzyme catalyses monodehydro-L-ascorbate radical(out) + L-ascorbate(in) = monodehydro-L-ascorbate radical(in) + L-ascorbate(out). In terms of biological role, transmembrane reductase that uses ascorbate as an electron donor in the cytoplasm and transfers electrons across membranes to reduce monodehydro-L-ascorbate radical in the lumen of secretory vesicles. It is therefore involved the regeneration and homeostasis within secretory vesicles of ascorbate which in turn provides reducing equivalents needed to support the activity of intravesicular enzymes. The polypeptide is Transmembrane ascorbate-dependent reductase CYB561 (Homo sapiens (Human)).